A 128-amino-acid polypeptide reads, in one-letter code: uncharacterized protein (128 aa).

The next 2 helical transmembrane spans lie at 52–72 (LLVILLLIIGFLSCLLGGIFL) and 91–111 (LFVAFFVVGSLLLLVAVVMLI).

It is found in the cell membrane. This is an uncharacterized protein from Mycoplasma pneumoniae (strain ATCC 29342 / M129 / Subtype 1) (Mycoplasmoides pneumoniae).